Consider the following 86-residue polypeptide: Cytochrome c oxidase subunit 12, mitochondrial (86 aa).

The CHCH domain maps to 30-73 (TKHCFQSYIDYFRCIKAKGEDFVPCKQFWHAYQSLCPMEWVERW). The Cx9C motif motif lies at 33–43 (CFQSYIDYFRC). 2 disulfide bridges follow: C33-C65 and C43-C54. Residues 54-65 (CKQFWHAYQSLC) carry the Cx10C motif motif.

It belongs to the cytochrome c oxidase subunit 6B family. In terms of assembly, component of the cytochrome c oxidase (complex IV, CIV), a multisubunit enzyme composed of a catalytic core of 3 subunits and several supernumerary subunits. The complex exists as a monomer or a dimer and forms supercomplexes (SCs) in the inner mitochondrial membrane with ubiquinol-cytochrome c oxidoreductase (cytochrome b-c1 complex, complex III, CIII).

Its subcellular location is the mitochondrion inner membrane. It participates in energy metabolism; oxidative phosphorylation. Component of the cytochrome c oxidase, the last enzyme in the mitochondrial electron transport chain which drives oxidative phosphorylation. The respiratory chain contains 3 multisubunit complexes succinate dehydrogenase (complex II, CII), ubiquinol-cytochrome c oxidoreductase (cytochrome b-c1 complex, complex III, CIII) and cytochrome c oxidase (complex IV, CIV), that cooperate to transfer electrons derived from NADH and succinate to molecular oxygen, creating an electrochemical gradient over the inner membrane that drives transmembrane transport and the ATP synthase. Cytochrome c oxidase is the component of the respiratory chain that catalyzes the reduction of oxygen to water. Electrons originating from reduced cytochrome c in the intermembrane space (IMS) are transferred via the dinuclear copper A center (CU(A)) of subunit 2 and heme A of subunit 1 to the active site in subunit 1, a binuclear center (BNC) formed by heme A3 and copper B (CU(B)). The BNC reduces molecular oxygen to 2 water molecules using 4 electrons from cytochrome c in the IMS and 4 protons from the mitochondrial matrix. The protein is Cytochrome c oxidase subunit 12, mitochondrial (cox12) of Schizosaccharomyces pombe (strain 972 / ATCC 24843) (Fission yeast).